Reading from the N-terminus, the 398-residue chain is Arylacetamide deacetylase (398 aa).

At 1 to 4 (GVKT) the chain is on the cytoplasmic side. The helical; Signal-anchor for type II membrane protein transmembrane segment at 5–22 (VLLLIVGVLGAYYVYTPL) threads the bilayer. Over 23-398 (PDNIEEPWRL…QYFEWLRENV (376 aa)) the chain is Lumenal. Asparagine 77 carries N-linked (GlcNAc...) asparagine glycosylation. Positions 110–112 (HGG) match the Involved in the stabilization of the negatively charged intermediate by the formation of the oxyanion hole motif. The cysteines at positions 115 and 339 are disulfide-linked. Serine 188 is a catalytic residue. N-linked (GlcNAc...) asparagine glycosylation occurs at asparagine 281. Active-site residues include aspartate 342 and histidine 372.

This sequence belongs to the 'GDXG' lipolytic enzyme family. Post-translationally, glycosylated.

The protein resides in the endoplasmic reticulum membrane. It is found in the microsome membrane. It catalyses the reaction a triacylglycerol + H2O = a diacylglycerol + a fatty acid + H(+). With respect to regulation, inhibited by diisopropylphosphofluoridate (DFP). In terms of biological role, displays cellular triglyceride lipase activity in liver, increases the levels of intracellular fatty acids derived from the hydrolysis of newly formed triglyceride stores and plays a role in very low-density lipoprotein assembly. Displays serine esterase activity in liver. Deacetylates a variety of arylacetamide substrates, including xenobiotic compounds and procarcinogens, converting them to the primary arylamide compounds and increasing their toxicity. The chain is Arylacetamide deacetylase from Oryctolagus cuniculus (Rabbit).